The following is a 363-amino-acid chain: Probable protein phosphatase 2C member 13, mitochondrial (363 aa).

A mitochondrion-targeting transit peptide spans 1–59 (MVCFASLRRALPLLLRATTTTTPRFLLPRALSGGVGGGAAVDARALLRGHSGWRGLRVA). The 247-residue stretch at 111–357 (KCGYSSFRGK…DNITCIVVQF (247 aa)) folds into the PPM-type phosphatase domain. D147, G148, D309, and D348 together coordinate Mn(2+).

The protein belongs to the PP2C family. Requires Mg(2+) as cofactor. It depends on Mn(2+) as a cofactor. Highly expressed in mature pollen grains.

The protein localises to the mitochondrion. The catalysed reaction is O-phospho-L-seryl-[protein] + H2O = L-seryl-[protein] + phosphate. It catalyses the reaction O-phospho-L-threonyl-[protein] + H2O = L-threonyl-[protein] + phosphate. In terms of biological role, probable protein phosphatase that may play a role as a mitochondrial signal transduction mediator in pollen germination. May function in retrograde signaling from the mitochondria to the nucleus. May be a downstream factor of cytoplasmic male sterility (CMS). CMS is caused by genetic incompatibility between nuclei and mitochondria within male reproductive organs. In Oryza sativa subsp. japonica (Rice), this protein is Probable protein phosphatase 2C member 13, mitochondrial.